We begin with the raw amino-acid sequence, 312 residues long: uncharacterized protein (312 aa).

At 1 to 14 (MSIVETCISFVSTN) the chain is on the extracellular side. A helical transmembrane segment spans residues 15–35 (PFYPFCTGLLLNCVVTPLYFW). Over 36–41 (KTQNGR) the chain is Cytoplasmic. The chain crosses the membrane as a helical span at residues 42 to 62 (IVVVSLLQFVVLYATAFISIG). Over 63 to 179 (TDKSLYRNKW…LEYDQDTATE (117 aa)) the chain is Extracellular. The 104-residue stretch at 70–173 (NKWVALPLSK…KGPLGELEYD (104 aa)) folds into the FAD-binding FR-type domain. The helical transmembrane segment at 180 to 200 (LGIIAGGSGITPVLQVLQEII) threads the bilayer. Over 201–312 (PSPEDLTHIS…GNGTDKVFVF (112 aa)) the chain is Cytoplasmic.

It belongs to the flavoprotein pyridine nucleotide cytochrome reductase family. FAD serves as cofactor.

Its subcellular location is the membrane. This is an uncharacterized protein from Saccharomyces cerevisiae (strain ATCC 204508 / S288c) (Baker's yeast).